A 420-amino-acid polypeptide reads, in one-letter code: UDP-N-acetylglucosamine 1-carboxyvinyltransferase (420 aa).

22–23 (KN) serves as a coordination point for phosphoenolpyruvate. Arg93 provides a ligand contact to UDP-N-acetyl-alpha-D-glucosamine. Catalysis depends on Cys117, which acts as the Proton donor. Cys117 is subject to 2-(S-cysteinyl)pyruvic acid O-phosphothioketal. Residues Asp306 and Ile328 each contribute to the UDP-N-acetyl-alpha-D-glucosamine site.

Belongs to the EPSP synthase family. MurA subfamily.

It is found in the cytoplasm. It carries out the reaction phosphoenolpyruvate + UDP-N-acetyl-alpha-D-glucosamine = UDP-N-acetyl-3-O-(1-carboxyvinyl)-alpha-D-glucosamine + phosphate. It participates in cell wall biogenesis; peptidoglycan biosynthesis. Functionally, cell wall formation. Adds enolpyruvyl to UDP-N-acetylglucosamine. This chain is UDP-N-acetylglucosamine 1-carboxyvinyltransferase, found in Colwellia psychrerythraea (strain 34H / ATCC BAA-681) (Vibrio psychroerythus).